The sequence spans 46 residues: Lariatin (46 aa).

A propeptide spanning residues 1-26 (MTSQPSKKTYNAPSLVQRGKFARTTA) is cleaved from the precursor. Positions 27–34 (GSQLVYRE) form a cross-link, isoglutamyl glycine isopeptide (Gly-Glu).

The linear precursor LarA is probably cleaved by the putative peptidase LarD, generating linear 18-residue Lariatin-A or 20-residue Lariatin-B. These linear peptides are probably cross-linked by LarB. Finally, lariatins A and B may be exported by ABC transporter LarE.

Functionally, peptide antibiotic with selective activity against Mycobacterium species (M.smegmatis, MIC=3.13 ug/ml and M.tuberculosis, MIC=0.39 ug/ml). it is plausible that the target of lariatins lies within the cell wall in mycobacteria. Peptide antibiotic with selective activity against Mycobacterium species (M.smegmatis, MIC=6.25 ug/ml). This is Lariatin from Rhodococcus jostii.